We begin with the raw amino-acid sequence, 104 residues long: Large ribosomal subunit protein uL24 (104 aa).

The interval 41-61 (ISKKHKKPTPNEKQSGGIFEK) is disordered.

This sequence belongs to the universal ribosomal protein uL24 family. Part of the 50S ribosomal subunit.

One of two assembly initiator proteins, it binds directly to the 5'-end of the 23S rRNA, where it nucleates assembly of the 50S subunit. Functionally, one of the proteins that surrounds the polypeptide exit tunnel on the outside of the subunit. This chain is Large ribosomal subunit protein uL24, found in Wigglesworthia glossinidia brevipalpis.